The sequence spans 233 residues: Lipoprotein-releasing system ATP-binding protein LolD (233 aa).

Residues 6-233 (LQCDNLCKRY…TAELSLMGAE (228 aa)) form the ABC transporter domain. 42-49 (GSSGSGKS) is a binding site for ATP.

It belongs to the ABC transporter superfamily. Lipoprotein translocase (TC 3.A.1.125) family. The complex is composed of two ATP-binding proteins (LolD) and two transmembrane proteins (LolC and LolE).

The protein resides in the cell inner membrane. Its function is as follows. Part of the ABC transporter complex LolCDE involved in the translocation of mature outer membrane-directed lipoproteins, from the inner membrane to the periplasmic chaperone, LolA. Responsible for the formation of the LolA-lipoprotein complex in an ATP-dependent manner. This chain is Lipoprotein-releasing system ATP-binding protein LolD, found in Shigella dysenteriae serotype 1 (strain Sd197).